We begin with the raw amino-acid sequence, 512 residues long: UDP-N-acetylmuramate--L-alanine ligase (512 aa).

132-138 (GAHGKTT) contributes to the ATP binding site.

The protein belongs to the MurCDEF family.

Its subcellular location is the cytoplasm. It catalyses the reaction UDP-N-acetyl-alpha-D-muramate + L-alanine + ATP = UDP-N-acetyl-alpha-D-muramoyl-L-alanine + ADP + phosphate + H(+). It participates in cell wall biogenesis; peptidoglycan biosynthesis. Its function is as follows. Cell wall formation. The sequence is that of UDP-N-acetylmuramate--L-alanine ligase from Bifidobacterium longum (strain NCC 2705).